We begin with the raw amino-acid sequence, 117 residues long: Large ribosomal subunit protein uL18 (117 aa).

The protein belongs to the universal ribosomal protein uL18 family. Part of the 50S ribosomal subunit; part of the 5S rRNA/L5/L18/L25 subcomplex. Contacts the 5S and 23S rRNAs.

This is one of the proteins that bind and probably mediate the attachment of the 5S RNA into the large ribosomal subunit, where it forms part of the central protuberance. The chain is Large ribosomal subunit protein uL18 from Azoarcus sp. (strain BH72).